Here is an 80-residue protein sequence, read N- to C-terminus: Small ribosomal subunit protein bS18 (80 aa).

It belongs to the bacterial ribosomal protein bS18 family. In terms of assembly, part of the 30S ribosomal subunit. Forms a tight heterodimer with protein bS6.

Functionally, binds as a heterodimer with protein bS6 to the central domain of the 16S rRNA, where it helps stabilize the platform of the 30S subunit. The polypeptide is Small ribosomal subunit protein bS18 (Clostridium botulinum (strain 657 / Type Ba4)).